We begin with the raw amino-acid sequence, 57 residues long: Potassium channel toxin MeuTXKalpha2 (57 aa).

An N-terminal signal peptide occupies residues 1 to 19 (MSRLYAIILIALVFNVIMT). Positions 20 to 28 (IMPDMKVEA) are excised as a propeptide. Cystine bridges form between C31-C47, C34-C52, and C38-C54.

This sequence belongs to the short scorpion toxin superfamily. Potassium channel inhibitor family. Alpha-KTx 08 subfamily. Expressed by the venom gland.

It is found in the secreted. In terms of biological role, inhibits Kv1.1/KCNA1, Kv1.3/KCNA3 and Shaker potassium channels. This is Potassium channel toxin MeuTXKalpha2 from Mesobuthus eupeus (Lesser Asian scorpion).